The following is a 216-amino-acid chain: Ribosomal RNA large subunit methyltransferase E (216 aa).

Residues glycine 67, tryptophan 69, aspartate 87, aspartate 103, and aspartate 128 each contribute to the S-adenosyl-L-methionine site. Catalysis depends on lysine 168, which acts as the Proton acceptor.

The protein belongs to the class I-like SAM-binding methyltransferase superfamily. RNA methyltransferase RlmE family.

It is found in the cytoplasm. The catalysed reaction is uridine(2552) in 23S rRNA + S-adenosyl-L-methionine = 2'-O-methyluridine(2552) in 23S rRNA + S-adenosyl-L-homocysteine + H(+). In terms of biological role, specifically methylates the uridine in position 2552 of 23S rRNA at the 2'-O position of the ribose in the fully assembled 50S ribosomal subunit. This chain is Ribosomal RNA large subunit methyltransferase E, found in Acinetobacter baumannii (strain AB307-0294).